The chain runs to 408 residues: Apoptosis-inducing factor homolog A (408 aa).

FAD contacts are provided by residues 34 to 38, Arg-69, and Asp-314; that span reads GCGFG.

Belongs to the FAD-dependent oxidoreductase family. FAD is required as a cofactor.

In terms of biological role, putative FAD-dependent oxidoreductase. In Dictyostelium discoideum (Social amoeba), this protein is Apoptosis-inducing factor homolog A (aifA).